Reading from the N-terminus, the 312-residue chain is Secreted RxLR effector protein 14 (312 aa).

The first 20 residues, 1-20 (MHSFKLLLALIVAICTSCDA), serve as a signal peptide directing secretion. Residues 46-61 (RLLRAKDGKVRADEER) carry the RxLR-dEER motif.

The protein belongs to the RxLR effector family.

It is found in the secreted. It localises to the host nucleus. In terms of biological role, secreted effector that completely suppresses the host cell death induced by cell death-inducing proteins. This Plasmopara viticola (Downy mildew of grapevine) protein is Secreted RxLR effector protein 14.